The primary structure comprises 122 residues: Small ribosomal subunit protein uS13 (122 aa).

The interval 99 to 122 (RGQRTHTNARTRKGPAKAIAGKKK) is disordered.

It belongs to the universal ribosomal protein uS13 family. As to quaternary structure, part of the 30S ribosomal subunit. Forms a loose heterodimer with protein S19. Forms two bridges to the 50S subunit in the 70S ribosome.

Functionally, located at the top of the head of the 30S subunit, it contacts several helices of the 16S rRNA. In the 70S ribosome it contacts the 23S rRNA (bridge B1a) and protein L5 of the 50S subunit (bridge B1b), connecting the 2 subunits; these bridges are implicated in subunit movement. Contacts the tRNAs in the A and P-sites. In Bradyrhizobium sp. (strain BTAi1 / ATCC BAA-1182), this protein is Small ribosomal subunit protein uS13.